An 899-amino-acid chain; its full sequence is Probable disease resistance protein RXW24L (899 aa).

Residues 13–50 are a coiled coil; it reads DRLSQEYDQFKGVEDQVTELKSNLNLLKSFLKDADAKK. An NB-ARC domain is found at 143–455; it reads LQERQREMRH…AEGISERRRY (313 aa). 189–196 is a binding site for ATP; the sequence is GMGGLGKT.

This sequence belongs to the disease resistance NB-LRR family.

Potential disease resistance protein. The protein is Probable disease resistance protein RXW24L (RXW24L) of Arabidopsis thaliana (Mouse-ear cress).